The following is a 303-amino-acid chain: UDP-3-O-acyl-N-acetylglucosamine deacetylase (303 aa).

Zn(2+)-binding residues include H78, H237, and D241. Residue H264 is the Proton donor of the active site.

Belongs to the LpxC family. Zn(2+) serves as cofactor.

The enzyme catalyses a UDP-3-O-[(3R)-3-hydroxyacyl]-N-acetyl-alpha-D-glucosamine + H2O = a UDP-3-O-[(3R)-3-hydroxyacyl]-alpha-D-glucosamine + acetate. Its pathway is glycolipid biosynthesis; lipid IV(A) biosynthesis; lipid IV(A) from (3R)-3-hydroxytetradecanoyl-[acyl-carrier-protein] and UDP-N-acetyl-alpha-D-glucosamine: step 2/6. Functionally, catalyzes the hydrolysis of UDP-3-O-myristoyl-N-acetylglucosamine to form UDP-3-O-myristoylglucosamine and acetate, the committed step in lipid A biosynthesis. The polypeptide is UDP-3-O-acyl-N-acetylglucosamine deacetylase (Chromohalobacter salexigens (strain ATCC BAA-138 / DSM 3043 / CIP 106854 / NCIMB 13768 / 1H11)).